The sequence spans 261 residues: V-type proton ATPase subunit D (261 aa).

Position 241 is a phosphoserine (S241).

Belongs to the V-ATPase D subunit family. V-ATPase is a heteromultimeric enzyme composed of a peripheral catalytic V1 complex (components A to H) attached to an integral membrane V0 proton pore complex (components: a, c, c'', d and e).

Its subcellular location is the vacuole membrane. In terms of biological role, subunit of the peripheral V1 complex of vacuolar ATPase. V-ATPase is responsible for acidifying a variety of intracellular compartments in eukaryotic cells, thus providing most of the energy required for transport processes in the vacuolar system. This is V-type proton ATPase subunit D (VHA-D) from Arabidopsis thaliana (Mouse-ear cress).